A 282-amino-acid polypeptide reads, in one-letter code: NADPH-dependent 7-cyano-7-deazaguanine reductase (282 aa).

88–90 is a substrate binding site; the sequence is IES. NADPH is bound at residue 90-91; it reads SK. Cys-190 serves as the catalytic Thioimide intermediate. Asp-197 serves as the catalytic Proton donor. 229-230 contacts substrate; it reads HE. 258–259 is a binding site for NADPH; the sequence is RG.

The protein belongs to the GTP cyclohydrolase I family. QueF type 2 subfamily. As to quaternary structure, homodimer.

The protein localises to the cytoplasm. It carries out the reaction 7-aminomethyl-7-carbaguanine + 2 NADP(+) = 7-cyano-7-deazaguanine + 2 NADPH + 3 H(+). The protein operates within tRNA modification; tRNA-queuosine biosynthesis. Functionally, catalyzes the NADPH-dependent reduction of 7-cyano-7-deazaguanine (preQ0) to 7-aminomethyl-7-deazaguanine (preQ1). The sequence is that of NADPH-dependent 7-cyano-7-deazaguanine reductase from Escherichia coli O81 (strain ED1a).